Here is a 367-residue protein sequence, read N- to C-terminus: 4-hydroxy-3-methylbut-2-en-1-yl diphosphate synthase (flavodoxin) (367 aa).

Positions 265, 268, 300, and 307 each coordinate [4Fe-4S] cluster.

Belongs to the IspG family. The cofactor is [4Fe-4S] cluster.

The enzyme catalyses (2E)-4-hydroxy-3-methylbut-2-enyl diphosphate + oxidized [flavodoxin] + H2O + 2 H(+) = 2-C-methyl-D-erythritol 2,4-cyclic diphosphate + reduced [flavodoxin]. Its pathway is isoprenoid biosynthesis; isopentenyl diphosphate biosynthesis via DXP pathway; isopentenyl diphosphate from 1-deoxy-D-xylulose 5-phosphate: step 5/6. Functionally, converts 2C-methyl-D-erythritol 2,4-cyclodiphosphate (ME-2,4cPP) into 1-hydroxy-2-methyl-2-(E)-butenyl 4-diphosphate. This Bacillus anthracis protein is 4-hydroxy-3-methylbut-2-en-1-yl diphosphate synthase (flavodoxin).